Here is a 388-residue protein sequence, read N- to C-terminus: Phosphopentomutase (388 aa).

Residues D11, D283, H288, D324, H325, and H336 each contribute to the Mn(2+) site.

Belongs to the phosphopentomutase family. The cofactor is Mn(2+).

The protein localises to the cytoplasm. It carries out the reaction 2-deoxy-alpha-D-ribose 1-phosphate = 2-deoxy-D-ribose 5-phosphate. It catalyses the reaction alpha-D-ribose 1-phosphate = D-ribose 5-phosphate. Its pathway is carbohydrate degradation; 2-deoxy-D-ribose 1-phosphate degradation; D-glyceraldehyde 3-phosphate and acetaldehyde from 2-deoxy-alpha-D-ribose 1-phosphate: step 1/2. Isomerase that catalyzes the conversion of deoxy-ribose 1-phosphate (dRib-1-P) and ribose 1-phosphate (Rib-1-P) to deoxy-ribose 5-phosphate (dRib-5-P) and ribose 5-phosphate (Rib-5-P), respectively. The protein is Phosphopentomutase of Anaeromyxobacter dehalogenans (strain 2CP-1 / ATCC BAA-258).